A 667-amino-acid chain; its full sequence is Homeobox protein 3 (667 aa).

Disordered regions lie at residues 44–108 (FFQP…NSSI), 179–232 (NNNN…TVYN), 249–268 (NNNNLNLTNNNNNKNSVNNN), and 331–418 (STNK…YQKQ). Residues 52 to 63 (LPPPTNQQPQPQ) show a composition bias toward pro residues. The segment covering 75–96 (CNSSFENSPQQPTSPLLISSQT) has biased composition (polar residues). Low complexity predominate over residues 97-108 (SYPSDLSSNSSI). Residues 334–343 (KRMKISHHSH) show a composition bias toward basic residues. Over residues 344-379 (SLSNNNENSLSQPYFNNNNNNNNENENVYNIVNEQN) the composition is skewed to low complexity. Positions 380 to 390 (PTFNPNQSNTH) are enriched in polar residues. Residues 386-454 (QSNTHQQQEE…ENENVICSEF (69 aa)) are a coiled coil. The segment at residues 602–664 (EFKSRRILSE…NKRMRDKSNK (63 aa)) is a DNA-binding region (homeobox).

The protein localises to the nucleus. Functionally, putative transcription factor. The polypeptide is Homeobox protein 3 (hbx3) (Dictyostelium discoideum (Social amoeba)).